Consider the following 142-residue polypeptide: Hemoglobin subunit alpha-4 (142 aa).

The Globin domain occupies 2–142; it reads VLSAADKSNV…VSTVLTSKYR (141 aa). Position 59 (His59) interacts with O2. His88 serves as a coordination point for heme b.

It belongs to the globin family. As to quaternary structure, heterotetramer of two alpha chains and two beta chains. Red blood cells.

Functionally, involved in oxygen transport from the lung to the various peripheral tissues. This is Hemoglobin subunit alpha-4 from Bubalus bubalis (Domestic water buffalo).